Here is a 302-residue protein sequence, read N- to C-terminus: Pantothenate synthetase 4 (302 aa).

Residue 51–58 participates in ATP binding; that stretch reads MGALHEGH. Catalysis depends on H58, which acts as the Proton donor. A (R)-pantoate-binding site is contributed by Q82. Q82 contacts beta-alanine. Residue 166-169 participates in ATP binding; that stretch reads GRKD. Q172 is a binding site for (R)-pantoate. ATP-binding positions include A195 and 203-206; that span reads RSSR.

The protein belongs to the pantothenate synthetase family. As to quaternary structure, homodimer.

It localises to the cytoplasm. It catalyses the reaction (R)-pantoate + beta-alanine + ATP = (R)-pantothenate + AMP + diphosphate + H(+). It participates in cofactor biosynthesis; (R)-pantothenate biosynthesis; (R)-pantothenate from (R)-pantoate and beta-alanine: step 1/1. Catalyzes the condensation of pantoate with beta-alanine in an ATP-dependent reaction via a pantoyl-adenylate intermediate. This Frankia alni (strain DSM 45986 / CECT 9034 / ACN14a) protein is Pantothenate synthetase 4.